We begin with the raw amino-acid sequence, 444 residues long: Glutamate-1-semialdehyde 2,1-aminomutase (444 aa).

Lysine 278 carries the N6-(pyridoxal phosphate)lysine modification.

It belongs to the class-III pyridoxal-phosphate-dependent aminotransferase family. HemL subfamily. As to quaternary structure, homodimer. Pyridoxal 5'-phosphate is required as a cofactor.

It is found in the cytoplasm. The catalysed reaction is (S)-4-amino-5-oxopentanoate = 5-aminolevulinate. It participates in porphyrin-containing compound metabolism; protoporphyrin-IX biosynthesis; 5-aminolevulinate from L-glutamyl-tRNA(Glu): step 2/2. This Deinococcus radiodurans (strain ATCC 13939 / DSM 20539 / JCM 16871 / CCUG 27074 / LMG 4051 / NBRC 15346 / NCIMB 9279 / VKM B-1422 / R1) protein is Glutamate-1-semialdehyde 2,1-aminomutase.